The chain runs to 792 residues: Kinesin-associated protein 3 (792 aa).

The residue at position 60 (Ser-60) is a Phosphoserine. Residues 103–119 are compositionally biased toward basic and acidic residues; it reads LSGKEKKEKSSKPKDPP. A disordered region spans residues 103-124; it reads LSGKEKKEKSSKPKDPPPFEGM. 5 ARM repeats span residues 333–373, 374–412, 494–533, 578–620, and 621–662; these read FMEN…NLSF, DTGL…HISM, DGPT…NLTI, DDSC…QMVF, and HQAT…IIAE.

Heterotrimer of KIFAP3, KIF3A and KIF3B. Interacts with RAP1GDS1/SMG GDS. Interacts with SMC3 subunit of the cohesin complex. Post-translationally, phosphorylated on tyrosine residues by SRC in vitro; this reduces the binding affinity of the protein for RAP1GDS1.

In terms of biological role, involved in tethering the chromosomes to the spindle pole and in chromosome movement. Binds to the tail domain of the KIF3A/KIF3B heterodimer to form a heterotrimeric KIF3 complex and may regulate the membrane binding of this complex. The polypeptide is Kinesin-associated protein 3 (KIFAP3) (Homo sapiens (Human)).